An 867-amino-acid chain; its full sequence is Prominin-1 (867 aa).

Residues 1–19 (MALVFSALLLLGLCGKISS) form the signal peptide. At 20–107 (EGQPAFHNTP…VLALKIALYE (88 aa)) the chain is on the extracellular side. Residues 108–128 (IGVLICAILGLLFIILMPLVG) traverse the membrane as a helical segment. Topologically, residues 129 to 158 (CFFCMCRCCNKCGGEMHQRQKQNAPCRRKC) are cytoplasmic. Residues 159–179 (LGLSLLVICLLMSLGIIYGFV) traverse the membrane as a helical segment. The Extracellular portion of the chain corresponds to 180–434 (ANQQTRTRIK…LPKLEEYDSY (255 aa)). 3 positions are modified to N6-acetyllysine: lysine 226, lysine 258, and lysine 265. Asparagine 273, asparagine 291, asparagine 332, asparagine 374, and asparagine 415 each carry an N-linked (GlcNAc...) asparagine glycan. A helical transmembrane segment spans residues 435–455 (WWLGGLIVCFLLTLIVTFFFL). The Cytoplasmic segment spans residues 456-487 (GLLCGVFGYDKHATPTRRGCVSNTGGIFLMAG). The chain crosses the membrane as a helical span at residues 488-508 (VGFGFLFCWILMILVVLTFVV). At 509–794 (GANVEKLLCE…LCGYVADPLN (286 aa)) the chain is on the extracellular side. Residues asparagine 554, asparagine 581, and asparagine 732 are each glycosylated (N-linked (GlcNAc...) asparagine). Residues 795–815 (LFWFGIGKATVLLLPAVIIAI) traverse the membrane as a helical segment. The Cytoplasmic portion of the chain corresponds to 816 to 867 (KLAKYYRRMDSEDVYDDVETVPMKNLEIGSNGYHKDHLYGVHNPVMTSPSRY). Position 865 is a phosphoserine (serine 865).

The protein belongs to the prominin family. In terms of assembly, interacts with CDHR1 and with actin filaments. Interacts with NAT8 and NAT8B. In terms of processing, acetylation at Lys-226, Lys-258 and Lys-265 by NAT8 and NAT8B may control PROM1 protein expression and its function in cell apoptosis. In terms of tissue distribution, in the submandibular gland, expressed on the apical side of epithelial cells. In the parotid gland, expressed in the intercalated ducts. In the sublingual gland, expressed in intercalated ducts. In the extraorbital lacrimal gland, expressed in the intercalated tubules and larger intralobular ducts. Expressed in the retina. Present in urine within small membrane particles (at protein level). In the embryo, expressed on the apical side of neuroepithelial cells and of other epithelia such as lung buds, gut and ureter buds. In the adult, expressed at the apical side of the kidney tubules and of the ependymal layer of the brain. Not expressed in gut, liver, lung, pituitary, adrenal, heart or spleen. Localized to the nascent disk membranes at the base of the rod outer segment in the retina (at protein level).

Its subcellular location is the apical cell membrane. The protein resides in the cell projection. It is found in the microvillus membrane. It localises to the cilium. The protein localises to the photoreceptor outer segment. Its subcellular location is the endoplasmic reticulum. The protein resides in the endoplasmic reticulum-Golgi intermediate compartment. Functionally, may play a role in cell differentiation, proliferation and apoptosis. Binds cholesterol in cholesterol-containing plasma membrane microdomains and may play a role in the organization of the apical plasma membrane in epithelial cells. During early retinal development acts as a key regulator of disk morphogenesis. Involved in regulation of MAPK and Akt signaling pathways. In neuroblastoma cells suppresses cell differentiation such as neurite outgrowth in a RET-dependent manner. The protein is Prominin-1 (Prom1) of Mus musculus (Mouse).